The chain runs to 426 residues: Enolase 1 (426 aa).

A (2R)-2-phosphoglycerate-binding site is contributed by Q162. The active-site Proton donor is E204. Positions 241, 284, and 311 each coordinate Mg(2+). (2R)-2-phosphoglycerate-binding residues include K336, R365, S366, and K387. The active-site Proton acceptor is K336.

It belongs to the enolase family. Requires Mg(2+) as cofactor.

It is found in the cytoplasm. Its subcellular location is the secreted. The protein localises to the cell surface. The enzyme catalyses (2R)-2-phosphoglycerate = phosphoenolpyruvate + H2O. It functions in the pathway carbohydrate degradation; glycolysis; pyruvate from D-glyceraldehyde 3-phosphate: step 4/5. In terms of biological role, catalyzes the reversible conversion of 2-phosphoglycerate (2-PG) into phosphoenolpyruvate (PEP). It is essential for the degradation of carbohydrates via glycolysis. In Methanospirillum hungatei JF-1 (strain ATCC 27890 / DSM 864 / NBRC 100397 / JF-1), this protein is Enolase 1.